A 2432-amino-acid polypeptide reads, in one-letter code: uncharacterized protein (2432 aa).

Belongs to the IIV-6 261R/396L/443R family.

This is an uncharacterized protein from Invertebrate iridescent virus 6 (IIV-6).